The chain runs to 92 residues: Small ribosomal subunit protein uS19 (92 aa).

Functionally, protein S19 forms a complex with S13 that binds strongly to the 16S ribosomal RNA. The sequence is that of Small ribosomal subunit protein uS19 from Rhodopseudomonas palustris (strain ATCC BAA-98 / CGA009).